The following is a 107-amino-acid chain: MVKFAHVVAFLLLASLFQPLTARDLEINVLQLDVSQSGCPGVTKERWPELLGTPAKFAMQIIQKENPKLTNVQTVLNGTPVTEDLRCNRVRLFVNVLDFVVQTPQVG.

Positions 1–22 (MVKFAHVVAFLLLASLFQPLTA) are cleaved as a signal peptide. Positions 23 to 39 (RDLEINVLQLDVSQSGC) are excised as a propeptide.

It belongs to the protease inhibitor I13 (potato type I serine protease inhibitor) family.

Its subcellular location is the secreted. The sequence is that of Proteinase inhibitor I-B (TIMPA) from Nicotiana tabacum (Common tobacco).